Consider the following 636-residue polypeptide: Probable Xaa-Pro aminopeptidase P (636 aa).

Residues aspartate 414, aspartate 425, glutamate 523, and glutamate 537 each coordinate Mn(2+).

This sequence belongs to the peptidase M24B family. Mn(2+) is required as a cofactor.

It carries out the reaction Release of any N-terminal amino acid, including proline, that is linked to proline, even from a dipeptide or tripeptide.. Its function is as follows. Catalyzes the removal of a penultimate prolyl residue from the N-termini of peptides. This Ajellomyces capsulatus (strain H143) (Darling's disease fungus) protein is Probable Xaa-Pro aminopeptidase P (AMPP).